A 257-amino-acid chain; its full sequence is Glucose-1-phosphate cytidylyltransferase (257 aa).

Substrate contacts are provided by residues 6 to 10 (LAGGL), 11 to 13 (GTR), K23, S104, R109, and G128. Mg(2+)-binding residues include D129 and D234.

Belongs to the glucose-1-phosphate cytidylyltransferase family. As to quaternary structure, homohexamer. Mg(2+) serves as cofactor.

It carries out the reaction alpha-D-glucose 1-phosphate + CTP + H(+) = CDP-D-glucose + diphosphate. Its pathway is nucleotide-sugar biosynthesis; CDP-3,6-dideoxy-D-mannose biosynthesis; CDP-3,6-dideoxy-D-mannose from CTP and alpha-D-glucose 1-phosphate: step 1/5. It functions in the pathway bacterial outer membrane biogenesis; LPS O-antigen biosynthesis. In terms of biological role, involved in the biosynthesis of the tyvelose, a 3,6-dideoxyhexose found in the O-antigen of the surface lipopolysaccharides. It catalyzes the transfer of a CMP moiety from CTP to glucose 1-phosphate. The polypeptide is Glucose-1-phosphate cytidylyltransferase (rfbF) (Salmonella typhimurium (strain LT2 / SGSC1412 / ATCC 700720)).